Consider the following 461-residue polypeptide: Complement C1r subcomponent-like protein (461 aa).

The N-terminal stretch at 1–22 is a signal peptide; it reads MCWLLLWGILHTCPTQASVLLA. Residues 23–139 form the CUB domain; that stretch reads QQFPQQLTSP…KGFLALYQAA (117 aa). Disulfide bonds link Cys-71/Cys-89 and Cys-164/Cys-197. In terms of domain architecture, Sushi spans 138–199; the sequence is AAVSQPNGDA…RGEEVPECVP (62 aa). Positions 214 to 453 constitute a Peptidase S1 domain; sequence TFGSSRAKPG…YVDWIKGVIE (240 aa). His-252 acts as the Charge relay system in catalysis. Asn-265 carries an N-linked (GlcNAc...) asparagine glycan. Catalysis depends on Asp-308, which acts as the Charge relay system. Asn-332 carries N-linked (GlcNAc...) asparagine glycosylation. 2 cysteine pairs are disulfide-bonded: Cys-371-Cys-390 and Cys-401-Cys-431. The Charge relay system role is filled by Ser-405.

Belongs to the peptidase S1 family.

The protein localises to the secreted. Mediates the proteolytic cleavage of HP/haptoglobin in the endoplasmic reticulum. In Rattus norvegicus (Rat), this protein is Complement C1r subcomponent-like protein (C1rl).